Reading from the N-terminus, the 282-residue chain is ATP synthase subunit a (282 aa).

A run of 6 helical transmembrane segments spans residues 38–58 (VDSM…LWLA), 97–117 (FVAP…AMDM), 145–165 (VVPT…LLLC), 187–207 (FGSH…EFVA), 225–247 (LIFI…GHIV), and 261–281 (TLQA…AHEG).

The protein belongs to the ATPase A chain family. In terms of assembly, F-type ATPases have 2 components, CF(1) - the catalytic core - and CF(0) - the membrane proton channel. CF(1) has five subunits: alpha(3), beta(3), gamma(1), delta(1), epsilon(1). CF(0) has three main subunits: a(1), b(2) and c(9-12). The alpha and beta chains form an alternating ring which encloses part of the gamma chain. CF(1) is attached to CF(0) by a central stalk formed by the gamma and epsilon chains, while a peripheral stalk is formed by the delta and b chains.

The protein localises to the cell inner membrane. In terms of biological role, key component of the proton channel; it plays a direct role in the translocation of protons across the membrane. The chain is ATP synthase subunit a from Azoarcus sp. (strain BH72).